The sequence spans 364 residues: Ribosomal RNA large subunit methyltransferase M (364 aa).

S-adenosyl-L-methionine is bound by residues Ser-198, 231–234 (APGG), Asp-250, Asp-270, and Asp-286. Lys-315 serves as the catalytic Proton acceptor.

Belongs to the class I-like SAM-binding methyltransferase superfamily. RNA methyltransferase RlmE family. RlmM subfamily. As to quaternary structure, monomer.

The protein resides in the cytoplasm. The enzyme catalyses cytidine(2498) in 23S rRNA + S-adenosyl-L-methionine = 2'-O-methylcytidine(2498) in 23S rRNA + S-adenosyl-L-homocysteine + H(+). In terms of biological role, catalyzes the 2'-O-methylation at nucleotide C2498 in 23S rRNA. This is Ribosomal RNA large subunit methyltransferase M from Thauera aminoaromatica.